Reading from the N-terminus, the 540-residue chain is MVVLAAAICTKNGKALLSRQFSEMTKSRVEGLLAAFPKLIGLGRQHTFIETENIRYVYQPLESLYIVLITNKNSNILEDLETLHLLAKLVPEYSNFDEYDISKNAFELIFTFDEVIAMGYKERVTLQQIKHFISMESHEEERFRMEEKIKQKEAQILASSKAKEIERMRHEEMLRGKRSGGYTGISGGGGMGSGGMGSNQYRDNDRDNYHSNNNNNNNNNNNNNNNNNNNRDRDRGDSPNTSRPSAASSGSQGGMILGGKSGTNKNSAIAQVLKEEKIVEKVEDVEQLLDSQISQIPETPTVPQEGVHITVEESFTSFVESDGTVESIDIKGGLSVQINDQSLGKVKVNLKQGKLSKQFQFITHPNIDKALFGEQSVLRLRDGGKGFPSGGILKWRCKTNQESMMPIRVNCWPSPGRDSTTVNLEYDSLVGYELKSVFIVIPNPTSNAPIINQFDGLYEYDNKQKCVIWKIPLIDDSNRQGSMEFSVKGNTQSFFPVKIQFTASQTICDTTVGSVFVEDSNQSTNFSTETTLSVDTYEIK.

The segment at 169–263 is disordered; the sequence is RHEEMLRGKR…GMILGGKSGT (95 aa). Positions 179–197 are enriched in gly residues; the sequence is SGGYTGISGGGGMGSGGMG. Over residues 212 to 229 the composition is skewed to low complexity; sequence NNNNNNNNNNNNNNNNNN. A compositionally biased stretch (polar residues) spans 238-250; sequence SPNTSRPSAASSG. The segment covering 251–261 has biased composition (gly residues); the sequence is SQGGMILGGKS. An MHD domain is found at 304-540; that stretch reads QEGVHITVEE…TLSVDTYEIK (237 aa).

Belongs to the adaptor complexes medium subunit family. Delta-COP subfamily. Oligomeric complex that consists of at least the alpha, beta, beta', gamma, delta, epsilon and zeta subunits.

It localises to the cytoplasm. The protein resides in the golgi apparatus membrane. It is found in the cytoplasmic vesicle. The protein localises to the COPI-coated vesicle membrane. In terms of biological role, the coatomer is a cytosolic protein complex that binds to dilysine motifs and reversibly associates with Golgi non-clathrin-coated vesicles, which further mediate biosynthetic protein transport from the ER, via the Golgi up to the trans Golgi network. Coatomer complex is required for budding from Golgi membranes, and is essential for the retrograde Golgi-to-ER transport of dilysine-tagged proteins. The polypeptide is Coatomer subunit delta (copd) (Dictyostelium discoideum (Social amoeba)).